Here is a 537-residue protein sequence, read N- to C-terminus: MSRRVEFDLSTEDHSDRRRTNTFSSSADEDGVPNEVADYLVYFSRMVDEQNVPEILTLYDQAFPDLTERFFRDRMWPDENVVERIIGPGNKLFIILYKELYYRQLYARNTRGPLLVHRYESFMNYQELFSELLSSKDPIPLSLPNVWLWDIIDEFVYQFQAFCLYKANPGKRNADEVEDLINIEENQNAWNIYPVLNILYSLLSKSQIVEQLKALKEKRNPDSVADEFGQSDLYFKLGYFALIGLLRTHVLLGDYHQALKTVQYVDIDPKGIYNTVPTCLVTLHYFVGFSHLMMRNYGEATKMFVNCLLYIQRTKSVQNQQPSKKNFQYDVIGKTWDQLFHLLAICLAIQPQRIDESIASQLSERCGERMMHMANGNIDEFRNAFATGCPKFLSPTTVVYEGVNQSKEPLLRQTQSFLEGIESQMALPVLRGYLKLYTTLPTKKLASFMDVDDEHYDSFIGKLLTYKMIVNELGKEAGPSSADDDEPQTDIDFYVDRDMINIADTKVARHVGEHFIRHIQKLQEVQDVLKRLDIQKP.

Residues 1–19 (MSRRVEFDLSTEDHSDRRR) are compositionally biased toward basic and acidic residues. The interval 1-30 (MSRRVEFDLSTEDHSDRRRTNTFSSSADED) is disordered. The 189-residue stretch at 299–487 (EATKMFVNCL…GPSSADDDEP (189 aa)) folds into the PCI domain.

It belongs to the eIF-3 subunit L family. As to quaternary structure, component of the eukaryotic translation initiation factor 3 (eIF-3) complex.

The protein resides in the cytoplasm. In terms of biological role, component of the eukaryotic translation initiation factor 3 (eIF-3) complex, which is involved in protein synthesis of a specialized repertoire of mRNAs and, together with other initiation factors, stimulates binding of mRNA and methionyl-tRNAi to the 40S ribosome. The eIF-3 complex specifically targets and initiates translation of a subset of mRNAs involved in cell proliferation. The chain is Eukaryotic translation initiation factor 3 subunit L from Caenorhabditis elegans.